A 434-amino-acid chain; its full sequence is Glutamate-1-semialdehyde 2,1-aminomutase (434 aa).

Lys274 carries the N6-(pyridoxal phosphate)lysine modification.

Belongs to the class-III pyridoxal-phosphate-dependent aminotransferase family. HemL subfamily. In terms of assembly, homodimer. It depends on pyridoxal 5'-phosphate as a cofactor.

The protein resides in the cytoplasm. The catalysed reaction is (S)-4-amino-5-oxopentanoate = 5-aminolevulinate. It participates in porphyrin-containing compound metabolism; protoporphyrin-IX biosynthesis; 5-aminolevulinate from L-glutamyl-tRNA(Glu): step 2/2. In Acidovorax sp. (strain JS42), this protein is Glutamate-1-semialdehyde 2,1-aminomutase.